The primary structure comprises 619 residues: Dihydroxy-acid dehydratase (619 aa).

Position 81 (Asp81) interacts with Mg(2+). Cys122 contacts [2Fe-2S] cluster. Positions 123 and 124 each coordinate Mg(2+). The residue at position 124 (Lys124) is an N6-carboxylysine. A [2Fe-2S] cluster-binding site is contributed by Cys195. Glu491 lines the Mg(2+) pocket. The Proton acceptor role is filled by Ser517.

This sequence belongs to the IlvD/Edd family. Homodimer. [2Fe-2S] cluster serves as cofactor. It depends on Mg(2+) as a cofactor.

The enzyme catalyses (2R)-2,3-dihydroxy-3-methylbutanoate = 3-methyl-2-oxobutanoate + H2O. The catalysed reaction is (2R,3R)-2,3-dihydroxy-3-methylpentanoate = (S)-3-methyl-2-oxopentanoate + H2O. It functions in the pathway amino-acid biosynthesis; L-isoleucine biosynthesis; L-isoleucine from 2-oxobutanoate: step 3/4. Its pathway is amino-acid biosynthesis; L-valine biosynthesis; L-valine from pyruvate: step 3/4. Functions in the biosynthesis of branched-chain amino acids. Catalyzes the dehydration of (2R,3R)-2,3-dihydroxy-3-methylpentanoate (2,3-dihydroxy-3-methylvalerate) into 2-oxo-3-methylpentanoate (2-oxo-3-methylvalerate) and of (2R)-2,3-dihydroxy-3-methylbutanoate (2,3-dihydroxyisovalerate) into 2-oxo-3-methylbutanoate (2-oxoisovalerate), the penultimate precursor to L-isoleucine and L-valine, respectively. This Rhodopseudomonas palustris (strain HaA2) protein is Dihydroxy-acid dehydratase.